The primary structure comprises 377 residues: Succinyl-diaminopimelate desuccinylase (377 aa).

His66 is a Zn(2+) binding site. The active site involves Asp68. Asp99 contributes to the Zn(2+) binding site. Catalysis depends on Glu133, which acts as the Proton acceptor. Glu134, Glu163, and His349 together coordinate Zn(2+).

This sequence belongs to the peptidase M20A family. DapE subfamily. As to quaternary structure, homodimer. Zn(2+) serves as cofactor. Co(2+) is required as a cofactor.

It carries out the reaction N-succinyl-(2S,6S)-2,6-diaminopimelate + H2O = (2S,6S)-2,6-diaminopimelate + succinate. It functions in the pathway amino-acid biosynthesis; L-lysine biosynthesis via DAP pathway; LL-2,6-diaminopimelate from (S)-tetrahydrodipicolinate (succinylase route): step 3/3. Its function is as follows. Catalyzes the hydrolysis of N-succinyl-L,L-diaminopimelic acid (SDAP), forming succinate and LL-2,6-diaminopimelate (DAP), an intermediate involved in the bacterial biosynthesis of lysine and meso-diaminopimelic acid, an essential component of bacterial cell walls. The protein is Succinyl-diaminopimelate desuccinylase of Legionella pneumophila (strain Lens).